Consider the following 241-residue polypeptide: MMMALQIFIKILPIMFFGILLANLMCHLNILYKLQKYIKNKYFPIIAVFFVSSTSGSFLLKNLLKKGEISEENLLPIYFLGMFVFGIHIILFYAIPMATSLGWYVGGIYVLIKFLVTCNYLIISVLMLKKRKYNIDIEFKSKSEGLYGAIRDTFKQYFRVLTSFVPSVLIITYLIEHGLLDIVEDFAGSLLNALNLSPTILVIVLTGLATISGAIGIASGLLDENILSPNEVLFSLFLAGF.

The next 6 helical transmembrane spans lie at 1 to 21, 43 to 63, 75 to 95, 108 to 128, 160 to 180, and 200 to 220; these read MMMA…GILL, FPII…LKNL, LPIY…FYAI, IYVL…VLML, VLTS…HGLL, and ILVI…IASG.

It to M.jannaschii MJ0871, MJ0880 and MJ1556.

It is found in the cell membrane. This is an uncharacterized protein from Methanocaldococcus jannaschii (strain ATCC 43067 / DSM 2661 / JAL-1 / JCM 10045 / NBRC 100440) (Methanococcus jannaschii).